We begin with the raw amino-acid sequence, 299 residues long: Very long chain fatty acid elongase 5 (299 aa).

Position 1 is an N-acetylmethionine (Met-1). 6 helical membrane-spanning segments follow: residues 26–46 (WFLL…LLIV), 64–84 (ILVV…CELV), 112–132 (VLRW…FFIL), 150–170 (MLNI…YFGA), 205–225 (GQLL…IWPC), and 226–246 (TFPL…IALF). The segment at 275–299 (AAVNGHTNSFSPLENNVKPRKLRKD) is disordered. A compositionally biased stretch (polar residues) spans 279–288 (GHTNSFSPLE). At Ser-285 the chain carries Phosphoserine.

This sequence belongs to the ELO family. ELOVL5 subfamily. In terms of assembly, interacts with TECR.

The protein localises to the endoplasmic reticulum membrane. It is found in the cell projection. The protein resides in the dendrite. It catalyses the reaction a very-long-chain acyl-CoA + malonyl-CoA + H(+) = a very-long-chain 3-oxoacyl-CoA + CO2 + CoA. It carries out the reaction (6Z,9Z,12Z)-octadecatrienoyl-CoA + malonyl-CoA + H(+) = (8Z,11Z,14Z)-3-oxoeicosatrienoyl-CoA + CO2 + CoA. The enzyme catalyses (9Z,12Z,15Z)-octadecatrienoyl-CoA + malonyl-CoA + H(+) = (11Z,14Z,17Z)-3-oxoeicosatrienoyl-CoA + CO2 + CoA. The catalysed reaction is (9Z)-hexadecenoyl-CoA + malonyl-CoA + H(+) = 3-oxo-(11Z)-octadecenoyl-CoA + CO2 + CoA. It catalyses the reaction (9Z)-octadecenoyl-CoA + malonyl-CoA + H(+) = 3-oxo-(11Z)-eicosenoyl-CoA + CO2 + CoA. It carries out the reaction (11Z)-octadecenoyl-CoA + malonyl-CoA + H(+) = 3-oxo-(13Z)-eicosenoyl-CoA + CO2 + CoA. The enzyme catalyses (9Z,12Z)-octadecadienoyl-CoA + malonyl-CoA + H(+) = (11Z,14Z)-3-oxoicosa-11,14-dienoyl-CoA + CO2 + CoA. The catalysed reaction is (6Z,9Z,12Z,15Z)-octadecatetraenoyl-CoA + malonyl-CoA + H(+) = (8Z,11Z,14Z,17Z)-3-oxoicosatetraenoyl-CoA + CO2 + CoA. It catalyses the reaction (5Z,8Z,11Z,14Z)-eicosatetraenoyl-CoA + malonyl-CoA + H(+) = (7Z,10Z,13Z,16Z)-3-oxodocosatetraenoyl-CoA + CO2 + CoA. It carries out the reaction (5Z,8Z,11Z,14Z,17Z)-eicosapentaenoyl-CoA + malonyl-CoA + H(+) = 3-oxo-(7Z,10Z,13Z,16Z,19Z)-docosapentaenoyl-CoA + CO2 + CoA. It functions in the pathway lipid metabolism; polyunsaturated fatty acid biosynthesis. Catalyzes the first and rate-limiting reaction of the four reactions that constitute the long-chain fatty acids elongation cycle. This endoplasmic reticulum-bound enzymatic process allows the addition of 2 carbons to the chain of long- and very long-chain fatty acids (VLCFAs) per cycle. Condensing enzyme that acts specifically toward polyunsaturated acyl-CoA with the higher activity toward C18:3(n-6) acyl-CoA. May participate in the production of monounsaturated and of polyunsaturated VLCFAs of different chain lengths that are involved in multiple biological processes as precursors of membrane lipids and lipid mediators. In conditions where the essential linoleic and alpha linoleic fatty acids are lacking it is also involved in the synthesis of Mead acid from oleic acid. In Macaca fascicularis (Crab-eating macaque), this protein is Very long chain fatty acid elongase 5.